The following is a 1218-amino-acid chain: Coatomer subunit alpha-1 (1218 aa).

9 WD repeats span residues 7 to 48, 49 to 88, 91 to 132, 133 to 172, 202 to 241, 246 to 285, 288 to 326, 363 to 404, and 450 to 489; these read TKSN…DRFD, EHDGPVRGVHFHATQPLFVSGGDDYKIKVWNYKTHRCLFT, GHLD…AVLT, GHNHYVMCASFHPKEDLVVSASLDQTVRVWDIGALRKKTV, GHDRGVNWASFHPTLPLIVSGADDRQVKLWRMNDTKAWEV, GHMNNVSCVMFHAKQDIIVSNSEDKSIRIWDATKRTGIQT, REHDRFWILSAHPEMNLLAAGHDSGMIVFKLERERPAFS, SLNQ…AGRA, and PLPIATDAIYYAGTGNLLCKAEDRVTIFDLQQRLILGELQ. The interval 857–882 is disordered; that stretch reads NGGDGFDAEEGEANEEDGEEGGWDLE. A compositionally biased stretch (acidic residues) spans 862–882; it reads FDAEEGEANEEDGEEGGWDLE.

As to quaternary structure, oligomeric complex that consists of at least the alpha, beta, beta', gamma, delta, epsilon and zeta subunits.

Its subcellular location is the cytoplasm. The protein localises to the golgi apparatus membrane. It is found in the cytoplasmic vesicle. The protein resides in the COPI-coated vesicle membrane. Its function is as follows. The coatomer is a cytosolic protein complex that binds to dilysine motifs and reversibly associates with Golgi non-clathrin-coated vesicles, which further mediate biosynthetic protein transport from the ER, via the Golgi up to the trans Golgi network. Coatomer complex is required for budding from Golgi membranes, and is essential for the retrograde Golgi-to-ER transport of dilysine-tagged proteins. This Oryza sativa subsp. japonica (Rice) protein is Coatomer subunit alpha-1.